The sequence spans 195 residues: Small ribosomal subunit protein uS7 (195 aa).

This sequence belongs to the universal ribosomal protein uS7 family. In terms of assembly, part of the 30S ribosomal subunit.

One of the primary rRNA binding proteins, it binds directly to 16S rRNA where it nucleates assembly of the head domain of the 30S subunit. Is located at the subunit interface close to the decoding center. In Sulfolobus acidocaldarius (strain ATCC 33909 / DSM 639 / JCM 8929 / NBRC 15157 / NCIMB 11770), this protein is Small ribosomal subunit protein uS7.